The following is a 401-amino-acid chain: Tumor necrosis factor receptor superfamily member 11B (401 aa).

The N-terminal stretch at Met1–Gln21 is a signal peptide. 4 TNFR-Cys repeats span residues Phe24–Cys62, Cys65–Cys105, Cys107–Cys142, and Cys145–Cys185. 8 disulfide bridges follow: Cys41–Cys54, Cys44–Cys62, Cys65–Cys80, Cys83–Cys97, Cys87–Cys105, Cys107–Cys118, Cys124–Cys142, and Cys145–Cys160. Asn98 carries an N-linked (GlcNAc...) asparagine glycan. 2 N-linked (GlcNAc...) asparagine glycosylation sites follow: Asn165 and Asn178. Cysteines 166 and 185 form a disulfide. 2 Death domains span residues Asp198 to Lys269 and Ile270 to Leu365. Asn289 carries N-linked (GlcNAc...) asparagine glycosylation.

As to quaternary structure, homodimer. Interacts with TNFSF10 and TNFSF11.

It localises to the secreted. In terms of biological role, acts as a decoy receptor for TNFSF11/RANKL and thereby neutralizes its function in osteoclastogenesis. Inhibits the activation of osteoclasts and promotes osteoclast apoptosis in vitro. Bone homeostasis seems to depend on the local ratio between TNFSF11 and TNFRSF11B. May also play a role in preventing arterial calcification. May act as decoy receptor for TNFSF10/TRAIL and protect against apoptosis. TNFSF10/TRAIL binding blocks the inhibition of osteoclastogenesis. In Rattus norvegicus (Rat), this protein is Tumor necrosis factor receptor superfamily member 11B (Tnfrsf11b).